The sequence spans 279 residues: Glutamate racemase (279 aa).

Substrate is bound by residues 13–14 (DS) and 45–46 (YG). The active-site Proton donor/acceptor is the cysteine 76. A substrate-binding site is contributed by 77-78 (NT). The Proton donor/acceptor role is filled by cysteine 185. A substrate-binding site is contributed by 186–187 (TH).

This sequence belongs to the aspartate/glutamate racemases family.

It carries out the reaction L-glutamate = D-glutamate. The protein operates within cell wall biogenesis; peptidoglycan biosynthesis. Functionally, provides the (R)-glutamate required for cell wall biosynthesis. This Synechocystis sp. (strain ATCC 27184 / PCC 6803 / Kazusa) protein is Glutamate racemase.